A 256-amino-acid polypeptide reads, in one-letter code: Proteasome subunit beta type-5 (256 aa).

Residues 1 to 55 (CNMALADIVRLPPASEAPFAPLGAPRDLSGPPSKLAVRPWGGADLPGPGLQLLHG) constitute a propeptide, removed in mature form. Catalysis depends on T56, which acts as the Nucleophile.

It belongs to the peptidase T1B family. In terms of assembly, the 26S proteasome consists of a 20S proteasome core and two 19S regulatory subunits. The 20S proteasome core is a barrel-shaped complex made of 28 subunits that are arranged in four stacked rings. The two outer rings are each formed by seven alpha subunits, and the two inner rings are formed by seven beta subunits. The proteolytic activity is exerted by three beta-subunits PSMB5, PSMB6 and PSMB7. Directly interacts with POMP. Interacts with ABCB1 and TAP1.

The protein resides in the cytoplasm. The protein localises to the nucleus. It carries out the reaction Cleavage of peptide bonds with very broad specificity.. In terms of biological role, component of the 20S core proteasome complex involved in the proteolytic degradation of most intracellular proteins. This complex plays numerous essential roles within the cell by associating with different regulatory particles. Associated with two 19S regulatory particles, forms the 26S proteasome and thus participates in the ATP-dependent degradation of ubiquitinated proteins. The 26S proteasome plays a key role in the maintenance of protein homeostasis by removing misfolded or damaged proteins that could impair cellular functions, and by removing proteins whose functions are no longer required. Associated with the PA200 or PA28, the 20S proteasome mediates ubiquitin-independent protein degradation. This type of proteolysis is required in several pathways including spermatogenesis (20S-PA200 complex) or generation of a subset of MHC class I-presented antigenic peptides (20S-PA28 complex). Within the 20S core complex, PSMB5 displays a chymotrypsin-like activity. This is Proteasome subunit beta type-5 (PSMB5) from Gallus gallus (Chicken).